A 415-amino-acid polypeptide reads, in one-letter code: Sphingomyelin synthase-related protein 1 (415 aa).

Residues 12–78 enclose the SAM domain; the sequence is WTTKHVAVWL…MLSVRKLQKI (67 aa). 4 consecutive transmembrane segments (helical) span residues 153–173, 201–221, 232–252, and 277–297; these read ILSC…MVIV, FAMT…VLLL, LCSL…VTSL, and FAIW…GDYM. Histidine 301 is an active-site residue. A helical membrane pass occupies residues 322–342; the sequence is FLHTLSWVLNLFGIFFILAAH. Active-site residues include histidine 344 and aspartate 348. Residues 347–367 form a helical membrane-spanning segment; that stretch reads IDVFIAFYITTRLFLYYHTLA. The Cytoplasmic portion of the chain corresponds to 368 to 415; the sequence is NTRAYQQSRRARIWFPMFSFFECNVNGTVPNEYCWPFSKPAIMKRLIG.

Belongs to the sphingomyelin synthase family.

It is found in the endoplasmic reticulum membrane. The enzyme catalyses an N-acylsphing-4-enine + a 1,2-diacyl-sn-glycero-3-phosphoethanolamine = an N-acylsphing-4-enine 1-phosphoethanolamine + a 1,2-diacyl-sn-glycerol. The catalysed reaction is an N-acylsphinganine + a 1,2-diacyl-sn-glycero-3-phosphoethanolamine = an N-acylsphinganine-1-phosphoethanolamine + a 1,2-diacyl-sn-glycerol. It catalyses the reaction an N-acyl-(4R)-4-hydroxysphinganine + a 1,2-diacyl-sn-glycero-3-phosphoethanolamine = an N-acyl-(4R)-4-hydroxysphinganine-1-phosphoethanolamine + a 1,2-diacyl-sn-glycerol. It carries out the reaction N-hexadecanoylsphinganine + a 1,2-diacyl-sn-glycero-3-phosphoethanolamine = N-hexadecanoyl-sphinganine-1-phosphoethanolamine + a 1,2-diacyl-sn-glycerol. The enzyme catalyses N-hexadecanoyl-(4R)-hydroxysphinganine + a 1,2-diacyl-sn-glycero-3-phosphoethanolamine = N-hexadecanoyl-(4R)-hydroxysphinganine-1-phosphoethanolamine + a 1,2-diacyl-sn-glycerol. Its pathway is sphingolipid metabolism. Synthesizes sphingolipids through transfer of a phosphatidyl head group from a glycerophospholipid on to the primary hydroxyl of a ceramide in the lumen of the endoplasmic reticulum. Catalyzes the synthesis of ceramide phosphoethanolamines (CPEs) (such as N-acylsphing-4-enine 1-phosphoethanolamine) by transferring phosphoethanolamine head group, which is smaller and more hydrophilic than the phosphocholine (PC) headgroup transferred in the canonical sphingomyelin synthesis (SMS) reaction by SMS1 or SMS2, from a phosphatidylethanolamine (1,2-diacyl-sn-glycero-3-phosphoethanolamine, PE) to a ceramide (such as N-acylsphing-4-enine). The larger PC prevents an efficient fit in the enzyme's catalytic pocket, leading to little or no SMS activity. In vitro, in the absence of ceramide, it has PLC activity with preference for phosphatidylinositol and phosphatidic acid, but also hydrolyzes phosphatidylethanolamine. This chain is Sphingomyelin synthase-related protein 1, found in Homo sapiens (Human).